Here is a 119-residue protein sequence, read N- to C-terminus: Beta-2-microglobulin (119 aa).

An N-terminal signal peptide occupies residues 1–20 (MARFVVVPLFVLLSLFGLEA). The region spanning 25–114 (PKIQVYSRYP…VTFSTPKTVK (90 aa)) is the Ig-like C1-type domain. Cysteine 45 and cysteine 100 are oxidised to a cystine.

The protein belongs to the beta-2-microglobulin family. Heterodimer of an alpha chain and a beta chain. Beta-2-microglobulin is the beta-chain of major histocompatibility complex class I molecules.

It localises to the secreted. Component of the class I major histocompatibility complex (MHC). Involved in the presentation of peptide antigens to the immune system. This Saguinus niger (Black tamarin) protein is Beta-2-microglobulin (B2M).